Consider the following 273-residue polypeptide: Large ribosomal subunit protein uL29m (273 aa).

Positions P247 to E258 are enriched in basic and acidic residues. The segment at P247–N273 is disordered.

Belongs to the universal ribosomal protein uL29 family. In terms of assembly, component of the mitochondrial large ribosomal subunit. Mature mitochondrial ribosomes consist of a small (37S) and a large (54S) subunit. The 37S subunit contains at least 33 different proteins and 1 molecule of RNA (15S). The 54S subunit contains at least 45 different proteins and 1 molecule of RNA (21S).

The protein localises to the mitochondrion. The sequence is that of Large ribosomal subunit protein uL29m (mrpl4) from Aspergillus niger (strain ATCC MYA-4892 / CBS 513.88 / FGSC A1513).